The chain runs to 140 residues: Putative septation protein SpoVG (140 aa).

The segment at 88-127 is disordered; it reads VAPQAGGLQGAEEPTAVEPAPQLQDESELPWEPGDDGEGA. A compositionally biased stretch (acidic residues) spans 112 to 124; it reads DESELPWEPGDDG.

It belongs to the SpoVG family.

Its function is as follows. Could be involved in septation. The chain is Putative septation protein SpoVG from Symbiobacterium thermophilum (strain DSM 24528 / JCM 14929 / IAM 14863 / T).